Consider the following 4246-residue polypeptide: Intermembrane lipid transfer protein vps13F (4246 aa).

The region spanning 2 to 113 (FESIVSNLLT…LLLQKKLKKL (112 aa)) is the Chorein N-terminal domain. Disordered regions lie at residues 141–271 (IKEK…EDED), 401–420 (PKKS…PPPK), 591–759 (KAED…SILG), 914–944 (VSSS…EKKL), 964–1014 (KKSK…TNDE), 1217–1251 (QAQQ…IKSP), 1356–1379 (ISTH…DRVD), 1395–1436 (YNGV…KSKK), 1622–1683 (REKR…KSQS), 2101–2131 (LESL…QQQQ), 2211–2237 (HHSK…EKEK), 2471–2513 (QQQH…KSKQ), 2704–2756 (LSTS…QTTK), 3421–3449 (IDDD…TSPL), 3611–3652 (KTLN…NNQN), and 3794–3813 (NNNN…NIDE). Over residues 168–201 (NASPVNSNNNNNNNSNLVSESNIPSSSSSSSSSL) the composition is skewed to low complexity. The segment covering 207–217 (NSSKDANKSDD) has biased composition (basic and acidic residues). The segment covering 218–271 (TDMDVDDDDEFQEATEGDYDNEEEQDDHDEEDDLSDDDDDDDDEEDDYEMEDED) has biased composition (acidic residues). Composition is skewed to low complexity over residues 401-413 (PKKS…TTTP) and 597-658 (QQQQ…SNST). The span at 659–668 (DSKDIMKSSG) shows a compositional bias: basic and acidic residues. Residues 669–680 (DKNVNNNNNMGD) show a composition bias toward low complexity. Basic and acidic residues predominate over residues 681–702 (NENKDNIDKKEENKNDDQDNKN). Composition is skewed to low complexity over residues 725–747 (SGGW…QQQQ) and 914–924 (VSSSPSPVSSP). Basic and acidic residues-rich tracts occupy residues 925 to 944 (SRDK…EKKL) and 987 to 1001 (DKYS…REES). Residues 1217-1241 (QAQQQAQQQQQSQHPSSNDDNSSSN) show a composition bias toward low complexity. Over residues 1400–1409 (SDDDNNDDEN) the composition is skewed to acidic residues. Basic and acidic residues-rich tracts occupy residues 1410–1431 (DKTT…DSLK) and 1622–1634 (REKR…DKDN). The segment covering 1644 to 1670 (QQSIPQKQQQQQQQQQQQQQQQQQQQQ) has biased composition (low complexity). 5 stretches are compositionally biased toward low complexity: residues 2471 to 2506 (QQQH…NNNN), 2705 to 2755 (STST…TQTT), 3430 to 3449 (DSGS…TSPL), 3613 to 3652 (LNNN…NNQN), and 3794 to 3809 (NNNN…NDFN).

It belongs to the VPS13 family.

The protein resides in the membrane. In terms of biological role, mediates the transfer of lipids between membranes at organelle contact sites. The protein is Intermembrane lipid transfer protein vps13F (vps13F) of Dictyostelium discoideum (Social amoeba).